Consider the following 630-residue polypeptide: Chaperone protein HtpG (630 aa).

The interval 1–339 is a; substrate-binding; sequence MKGQETRGFQ…SNDLPLNVSR (339 aa). The interval 340–555 is b; the sequence is EILQDNSITR…VDEMSTQMAK (216 aa). A c region spans residues 556 to 630; sequence LFAAAGQQVP…MNQLLLSEKA (75 aa).

It belongs to the heat shock protein 90 family. In terms of assembly, homodimer.

Its subcellular location is the cytoplasm. Functionally, molecular chaperone. Has ATPase activity. The polypeptide is Chaperone protein HtpG (Photorhabdus laumondii subsp. laumondii (strain DSM 15139 / CIP 105565 / TT01) (Photorhabdus luminescens subsp. laumondii)).